We begin with the raw amino-acid sequence, 416 residues long: MSLSSKLTVQDLELKDKRVFIRVDFNVPLDGKKITSNQRIVAALPTIKYVLEHNPRYVVLASHLGRPNGERNEKYSLAPVAEELQSLLGKPVTFLNDCVGSEVDSAVKASAPGSVILLENLRYHIEEEGSRKVDGQKVKASAEDVAKFRKELCSLADVYINDAFGTAHRAHSSMVGFDLPQRAAGFLLTKELQYFGKALENPTRPFLAILGGAKVADKIQLIDNLLDKVDSIIIGGGMAFTFKKVLENAEIGDSIFDKAGAEIVPKLMEKAKAKGVEVVLPVDFVIADAFSADANTKIVSDKEGIPAGWQGLDNGPESRKLFAATIAKAKTIVWNGPPGVFEFEKFASGTKAMLDEVVKSSTSGNTVIIGGGDTATVAKKYGVTDKISHVSTGGGASLELLEGKELPGVAFLSEKN.

Residues V23, D24, F25, N26, Q38, R39, S62, H63, G65, R66, L121, R122, H168, and R169 each coordinate (2R)-3-phosphoglycerate. ADP is bound at residue G212. Residue G212 participates in CDP binding. The AMP site is built by A213 and K214. Residue A213 coordinates ATP. A213 contributes to the Mg(2+) binding site. 2 residues coordinate Mg(2+): A216 and D217. A CDP-binding site is contributed by D217. AMP is bound at residue K218. K218 is a binding site for ATP. G236 lines the ADP pocket. G236 is a binding site for CDP. AMP contacts are provided by G237 and G311. Residues G237 and G311 each contribute to the ATP site. G336 and F341 together coordinate CDP. F341 lines the ADP pocket. E342 is a binding site for AMP. Residues E342, D373, and T374 each contribute to the ATP site. Residue D373 participates in Mg(2+) binding.

It belongs to the phosphoglycerate kinase family. Monomer. Requires Mg(2+) as cofactor.

It is found in the cytoplasm. It localises to the mitochondrion. It catalyses the reaction (2R)-3-phosphoglycerate + ATP = (2R)-3-phospho-glyceroyl phosphate + ADP. It participates in carbohydrate degradation; glycolysis; pyruvate from D-glyceraldehyde 3-phosphate: step 2/5. In terms of biological role, catalyzes one of the two ATP producing reactions in the glycolytic pathway via the reversible conversion of 1,3-diphosphoglycerate to 3-phosphoglycerate. Both L- and D- forms of purine and pyrimidine nucleotides can be used as substrates, but the activity is much lower on pyrimidines. Negatively regulates the biosynthesis of acetyl-CoA from pyruvate in the mitochondrion. The chain is Phosphoglycerate kinase (PGK1) from Candida glabrata (strain ATCC 2001 / BCRC 20586 / JCM 3761 / NBRC 0622 / NRRL Y-65 / CBS 138) (Yeast).